The primary structure comprises 260 residues: MIIVLSPAKSLDYDTPAHVPSYTLPAFVDDASELIHGLRKLSPQDIATLMDISDPLARLNFQRYADWSPTFTPANAKQAVLAFNGDVYEGFDAKSLSSTDLDYAQQHVRVLSGLYGLLRPLDLLQPYRLEMGTRFANARGKDLYAFWGDRITRALNEQLETRSGAARVLVNCASTEYFKSVKPKLLAAPVITPVFEDWKGGRYKIISFHAKRARGLMARFVVENRITDPKALKAFATEGYAFDAAASNDSTYVYRRRIGE.

It belongs to the UPF0246 family.

The chain is UPF0246 protein BceJ2315_22780 from Burkholderia cenocepacia (strain ATCC BAA-245 / DSM 16553 / LMG 16656 / NCTC 13227 / J2315 / CF5610) (Burkholderia cepacia (strain J2315)).